The chain runs to 175 residues: Cytochrome c homolog (175 aa).

Over Met-1 to Lys-8 the chain is Cytoplasmic. A helical; Signal-anchor membrane pass occupies residues Ile-9–Ile-29. The Periplasmic portion of the chain corresponds to Leu-30–Lys-175. Heme c contacts are provided by Cys-84, Cys-87, His-88, and Met-150.

Belongs to the cytochrome c family. In terms of processing, binds 1 heme c group covalently per subunit.

Its subcellular location is the cell membrane. Functionally, may be involved in electron transfer from bc1 complex to aa3. This is Cytochrome c homolog (cycM) from Rickettsia conorii (strain ATCC VR-613 / Malish 7).